The chain runs to 523 residues: ATP synthase subunit alpha (523 aa).

179 to 186 (GDRQTGKT) lines the ATP pocket.

Belongs to the ATPase alpha/beta chains family. F-type ATPases have 2 components, CF(1) - the catalytic core - and CF(0) - the membrane proton channel. CF(1) has five subunits: alpha(3), beta(3), gamma(1), delta(1), epsilon(1). CF(0) has three main subunits: a(1), b(2) and c(9-12). The alpha and beta chains form an alternating ring which encloses part of the gamma chain. CF(1) is attached to CF(0) by a central stalk formed by the gamma and epsilon chains, while a peripheral stalk is formed by the delta and b chains.

The protein resides in the cell inner membrane. It catalyses the reaction ATP + H2O + 4 H(+)(in) = ADP + phosphate + 5 H(+)(out). Functionally, produces ATP from ADP in the presence of a proton gradient across the membrane. The alpha chain is a regulatory subunit. The polypeptide is ATP synthase subunit alpha (Vibrio vulnificus (strain YJ016)).